Reading from the N-terminus, the 284-residue chain is Polyamine aminopropyltransferase (284 aa).

The PABS domain occupies 2-237; the sequence is ELWYTEEQTQ…GYWLFGFASK (236 aa). An S-methyl-5'-thioadenosine-binding site is contributed by Gln-31. Residues His-62 and Asp-86 each coordinate spermidine. Residues Glu-106 and 137–138 contribute to the S-methyl-5'-thioadenosine site; that span reads DG. Catalysis depends on Asp-155, which acts as the Proton acceptor. 155–158 contributes to the spermidine binding site; it reads DSTD. Position 162 (Pro-162) interacts with S-methyl-5'-thioadenosine.

It belongs to the spermidine/spermine synthase family. In terms of assembly, homodimer or homotetramer.

The protein resides in the cytoplasm. The catalysed reaction is S-adenosyl 3-(methylsulfanyl)propylamine + putrescine = S-methyl-5'-thioadenosine + spermidine + H(+). It functions in the pathway amine and polyamine biosynthesis; spermidine biosynthesis; spermidine from putrescine: step 1/1. Functionally, catalyzes the irreversible transfer of a propylamine group from the amino donor S-adenosylmethioninamine (decarboxy-AdoMet) to putrescine (1,4-diaminobutane) to yield spermidine. The chain is Polyamine aminopropyltransferase from Alkaliphilus metalliredigens (strain QYMF).